The following is a 364-amino-acid chain: Aminomethyltransferase (364 aa).

Belongs to the GcvT family. The glycine cleavage system is composed of four proteins: P, T, L and H.

It carries out the reaction N(6)-[(R)-S(8)-aminomethyldihydrolipoyl]-L-lysyl-[protein] + (6S)-5,6,7,8-tetrahydrofolate = N(6)-[(R)-dihydrolipoyl]-L-lysyl-[protein] + (6R)-5,10-methylene-5,6,7,8-tetrahydrofolate + NH4(+). In terms of biological role, the glycine cleavage system catalyzes the degradation of glycine. The polypeptide is Aminomethyltransferase (Anoxybacillus flavithermus (strain DSM 21510 / WK1)).